Consider the following 393-residue polypeptide: NAD(P)H-quinone oxidoreductase subunit H, chloroplastic (393 aa).

The protein belongs to the complex I 49 kDa subunit family. NDH is composed of at least 16 different subunits, 5 of which are encoded in the nucleus.

It localises to the plastid. The protein localises to the chloroplast thylakoid membrane. The enzyme catalyses a plastoquinone + NADH + (n+1) H(+)(in) = a plastoquinol + NAD(+) + n H(+)(out). It carries out the reaction a plastoquinone + NADPH + (n+1) H(+)(in) = a plastoquinol + NADP(+) + n H(+)(out). Functionally, NDH shuttles electrons from NAD(P)H:plastoquinone, via FMN and iron-sulfur (Fe-S) centers, to quinones in the photosynthetic chain and possibly in a chloroplast respiratory chain. The immediate electron acceptor for the enzyme in this species is believed to be plastoquinone. Couples the redox reaction to proton translocation, and thus conserves the redox energy in a proton gradient. The chain is NAD(P)H-quinone oxidoreductase subunit H, chloroplastic from Cryptomeria japonica (Japanese cedar).